The chain runs to 221 residues: 7-cyano-7-deazaguanine synthase (221 aa).

Position 10 to 20 (10 to 20) interacts with ATP; that stretch reads FSGGQDSTTCL. Residues Cys186, Cys195, Cys198, and Cys201 each contribute to the Zn(2+) site.

The protein belongs to the QueC family. In terms of assembly, homodimer. Requires Zn(2+) as cofactor.

The catalysed reaction is 7-carboxy-7-deazaguanine + NH4(+) + ATP = 7-cyano-7-deazaguanine + ADP + phosphate + H2O + H(+). Its pathway is purine metabolism; 7-cyano-7-deazaguanine biosynthesis. In terms of biological role, catalyzes the ATP-dependent conversion of 7-carboxy-7-deazaguanine (CDG) to 7-cyano-7-deazaguanine (preQ(0)). The chain is 7-cyano-7-deazaguanine synthase from Geobacillus kaustophilus (strain HTA426).